Consider the following 180-residue polypeptide: Negative modulator of initiation of replication (180 aa).

Residues 115-119 (RTRVY) are interaction with DNA.

The protein belongs to the SeqA family. As to quaternary structure, homodimer. Polymerizes to form helical filaments.

The protein resides in the cytoplasm. Its function is as follows. Negative regulator of replication initiation, which contributes to regulation of DNA replication and ensures that replication initiation occurs exactly once per chromosome per cell cycle. Binds to pairs of hemimethylated GATC sequences in the oriC region, thus preventing assembly of replication proteins and re-initiation at newly replicated origins. Repression is relieved when the region becomes fully methylated. The protein is Negative modulator of initiation of replication of Aliivibrio fischeri (strain ATCC 700601 / ES114) (Vibrio fischeri).